A 492-amino-acid chain; its full sequence is MDDQYKNDHQNFVSGNDGSTFFETCFILTLMPISVLFQRVVFATFFNNDKFPLPLALRFILEFFFIIVPFISAITFTELTPFLIVGMLITCLVVPMFAQKNVTIYFKNPKETLLNLNSMRKGFLEEYRAFVMAATCICILAVDFQVFPRRLGKTETYGISLMDIGVGSVVLSGALVSRQSRSSLIEKQQKKKREEEEDDNDKINKTSSSSSSSSSALKQQQQQVLSRSSLMWHQVKAQAPLMILGFVRMILTKSINYQEHVSEYGLHWNFFFTLGFVSISLAFLKFNANISAILGVVLICVYQFLLNSFGLTDYILNHPRDNLISMNKEGICSFVGYLAIYLIGTKIGTELFKVRSSLTEWRKFATKLLISSIVFYILWILCEIYIDKTSRRMANLGYVLAILSINLFNFSINILITLITGNHNASVIAKSINRNQLFIFLLGNILTGLINFSMKTIYAPVEQSMIIITSYTFALCLLAFILDYKNINIKFW.

Helical transmembrane passes span 26-46, 59-79, 82-102, 127-147, and 156-176; these read FILTLMPISVLFQRVVFATFF, FILEFFFIIVPFISAITFTEL, FLIVGMLITCLVVPMFAQKNV, YRAFVMAATCICILAVDFQVF, and TYGISLMDIGVGSVVLSGALV. Residues 185–216 form a disordered region; sequence IEKQQKKKREEEEDDNDKINKTSSSSSSSSSA. N-linked (GlcNAc...) asparagine glycosylation occurs at Asn204. The segment covering 205 to 216 has biased composition (low complexity); that stretch reads KTSSSSSSSSSA. The chain crosses the membrane as a helical span at residues 264–284; it reads YGLHWNFFFTLGFVSISLAFL. An N-linked (GlcNAc...) asparagine glycan is attached at Asn289. 4 helical membrane-spanning segments follow: residues 290–310, 331–351, 364–384, and 399–419; these read ISAILGVVLICVYQFLLNSFG, ICSFVGYLAIYLIGTKIGTEL, FATKLLISSIVFYILWILCEI, and VLAILSINLFNFSINILITLI. A glycan (N-linked (GlcNAc...) asparagine) is linked at Asn424. Transmembrane regions (helical) follow at residues 437–457 and 464–484; these read LFIFLLGNILTGLINFSMKTI and SMIIITSYTFALCLLAFILDY.

Belongs to the PIGW family.

The protein localises to the endoplasmic reticulum membrane. It functions in the pathway glycolipid biosynthesis; glycosylphosphatidylinositol-anchor biosynthesis. Probable acetyltransferase, which acetylates the inositol ring of phosphatidylinositol during biosynthesis of GPI-anchor. The polypeptide is Phosphatidylinositol-glycan biosynthesis class W protein (Dictyostelium discoideum (Social amoeba)).